Here is a 289-residue protein sequence, read N- to C-terminus: Poly-beta-1,6-N-acetyl-D-glucosamine N-deacetylase (289 aa).

The first 30 residues, 1-30 (MKPFKLIFISALMILIMTNATPISHLNAQA), serve as a signal peptide directing secretion. A NodB homology domain is found at 113-289 (RSVWINFDDM…KEWDGFDEEK (177 aa)).

This sequence belongs to the polysaccharide deacetylase family.

Its subcellular location is the secreted. The protein resides in the cell wall. Functionally, catalyzes the N-deacetylation of poly-beta-1,6-N-acetyl-D-glucosamine (PNAG, also referred to as PIA), a biofilm adhesin polysaccharide. In fact, the IcaB deacetylase converts 15 to 20% of the GlcNAc residues of PNAG to glucosamine. N-deacetylation is crucial for attachment of the polysaccharide to the bacterial cell surface; it leads to the introduction of positive charges in the otherwise neutral PIA polymer, allowing electrostatic interactions. Deacetylation of the polymer is also essential for key virulence mechanisms of S.epidermidis, namely biofilm formation, colonization, and resistance to neutrophil phagocytosis and human antibacterial peptides. This Staphylococcus epidermidis (strain ATCC 35984 / DSM 28319 / BCRC 17069 / CCUG 31568 / BM 3577 / RP62A) protein is Poly-beta-1,6-N-acetyl-D-glucosamine N-deacetylase (icaB).